Here is a 393-residue protein sequence, read N- to C-terminus: NAD(P)H-quinone oxidoreductase subunit H, chloroplastic (393 aa).

This sequence belongs to the complex I 49 kDa subunit family. NDH is composed of at least 16 different subunits, 5 of which are encoded in the nucleus.

The protein localises to the plastid. It is found in the chloroplast thylakoid membrane. The catalysed reaction is a plastoquinone + NADH + (n+1) H(+)(in) = a plastoquinol + NAD(+) + n H(+)(out). It carries out the reaction a plastoquinone + NADPH + (n+1) H(+)(in) = a plastoquinol + NADP(+) + n H(+)(out). Its function is as follows. NDH shuttles electrons from NAD(P)H:plastoquinone, via FMN and iron-sulfur (Fe-S) centers, to quinones in the photosynthetic chain and possibly in a chloroplast respiratory chain. The immediate electron acceptor for the enzyme in this species is believed to be plastoquinone. Couples the redox reaction to proton translocation, and thus conserves the redox energy in a proton gradient. This chain is NAD(P)H-quinone oxidoreductase subunit H, chloroplastic, found in Ceratophyllum demersum (Rigid hornwort).